Consider the following 104-residue polypeptide: Small ribosomal subunit protein uS10 (104 aa).

It belongs to the universal ribosomal protein uS10 family. Part of the 30S ribosomal subunit.

In terms of biological role, involved in the binding of tRNA to the ribosomes. This Maricaulis maris (strain MCS10) (Caulobacter maris) protein is Small ribosomal subunit protein uS10.